A 161-amino-acid polypeptide reads, in one-letter code: Nucleotide-binding protein Mmc1_1670 (161 aa).

Belongs to the YajQ family.

In terms of biological role, nucleotide-binding protein. In Magnetococcus marinus (strain ATCC BAA-1437 / JCM 17883 / MC-1), this protein is Nucleotide-binding protein Mmc1_1670.